A 271-amino-acid polypeptide reads, in one-letter code: Formamidopyrimidine-DNA glycosylase (271 aa).

Residue Pro2 is the Schiff-base intermediate with DNA of the active site. Glu3 (proton donor) is an active-site residue. The active-site Proton donor; for beta-elimination activity is Lys58. The DNA site is built by His91, Arg110, and Arg152. The segment at 237 to 271 (WVYGRTGQPCRKCGALVSKTRQGQRSSFFCAQCQK) adopts an FPG-type zinc-finger fold. Arg261 (proton donor; for delta-elimination activity) is an active-site residue.

It belongs to the FPG family. Monomer. Zn(2+) is required as a cofactor.

It catalyses the reaction Hydrolysis of DNA containing ring-opened 7-methylguanine residues, releasing 2,6-diamino-4-hydroxy-5-(N-methyl)formamidopyrimidine.. The catalysed reaction is 2'-deoxyribonucleotide-(2'-deoxyribose 5'-phosphate)-2'-deoxyribonucleotide-DNA = a 3'-end 2'-deoxyribonucleotide-(2,3-dehydro-2,3-deoxyribose 5'-phosphate)-DNA + a 5'-end 5'-phospho-2'-deoxyribonucleoside-DNA + H(+). In terms of biological role, involved in base excision repair of DNA damaged by oxidation or by mutagenic agents. Acts as a DNA glycosylase that recognizes and removes damaged bases. Has a preference for oxidized purines, such as 7,8-dihydro-8-oxoguanine (8-oxoG). Has AP (apurinic/apyrimidinic) lyase activity and introduces nicks in the DNA strand. Cleaves the DNA backbone by beta-delta elimination to generate a single-strand break at the site of the removed base with both 3'- and 5'-phosphates. The chain is Formamidopyrimidine-DNA glycosylase from Nitrosomonas eutropha (strain DSM 101675 / C91 / Nm57).